The primary structure comprises 103 residues: Putative truncated guanine nucleotide exchange factor YLL017W (103 aa).

An SH3 domain is found at 26–97; that stretch reads QPIDVVECTY…PPSFYTVHSK (72 aa).

This is Putative truncated guanine nucleotide exchange factor YLL017W from Saccharomyces cerevisiae (strain ATCC 204508 / S288c) (Baker's yeast).